Here is a 173-residue protein sequence, read N- to C-terminus: 6,7-dimethyl-8-ribityllumazine synthase (173 aa).

5-amino-6-(D-ribitylamino)uracil-binding positions include Phe-24, 58 to 60 (ALE), and 82 to 84 (AVI). Residue 87-88 (ET) participates in (2S)-2-hydroxy-3-oxobutyl phosphate binding. His-90 serves as the catalytic Proton donor. Residue Asn-115 participates in 5-amino-6-(D-ribitylamino)uracil binding. Arg-129 serves as a coordination point for (2S)-2-hydroxy-3-oxobutyl phosphate. Residues 150 to 173 (ALEPEEDDEDDEDEDFDDEEDDGR) are disordered. Over residues 152 to 173 (EPEEDDEDDEDEDFDDEEDDGR) the composition is skewed to acidic residues.

This sequence belongs to the DMRL synthase family.

The enzyme catalyses (2S)-2-hydroxy-3-oxobutyl phosphate + 5-amino-6-(D-ribitylamino)uracil = 6,7-dimethyl-8-(1-D-ribityl)lumazine + phosphate + 2 H2O + H(+). It functions in the pathway cofactor biosynthesis; riboflavin biosynthesis; riboflavin from 2-hydroxy-3-oxobutyl phosphate and 5-amino-6-(D-ribitylamino)uracil: step 1/2. In terms of biological role, catalyzes the formation of 6,7-dimethyl-8-ribityllumazine by condensation of 5-amino-6-(D-ribitylamino)uracil with 3,4-dihydroxy-2-butanone 4-phosphate. This is the penultimate step in the biosynthesis of riboflavin. The chain is 6,7-dimethyl-8-ribityllumazine synthase from Bordetella pertussis (strain Tohama I / ATCC BAA-589 / NCTC 13251).